The following is a 425-amino-acid chain: Histone-binding protein RBBP4-A (425 aa).

At Ala2 the chain carries N-acetylalanine. WD repeat units lie at residues 32–125, 126–175, 176–223, 225–270, 271–314, 315–371, and 372–404; these read YDLV…THDG, EVNR…RLRG, HQKE…KTIF, GHTA…HSVD, AHTA…HSFE, SHKD…FIHG, and GHTAKISDFSWNPNEPWVICSVSEDNIMQVWQM.

It belongs to the WD repeat RBAP46/RBAP48/MSI1 family. Binds directly to histone H4, probably via helix 1 of the histone fold, a region that is not accessible when histone H4 is in chromatin. Probably forms a large corepressor complex that contains ncor1, sin3a, hdac1-A and/or hdac1-B, hdac2, rbbp4-A and/or rbbp4-B and possibly rbbp7.

The protein resides in the nucleus. It is found in the chromosome. Its subcellular location is the telomere. In terms of biological role, core histone-binding subunit that may target chromatin assembly factors, chromatin remodeling factors and histone deacetylases to their histone substrates in a manner that is regulated by nucleosomal DNA. Component of several complexes which regulate chromatin metabolism. This Xenopus laevis (African clawed frog) protein is Histone-binding protein RBBP4-A (rbbp4-a).